Consider the following 1050-residue polypeptide: Diacylglycerol kinase iota (1050 aa).

3 disordered regions span residues 53 to 74 (PSSSAGEERGATGGSSSSGSGA), 92 to 111 (AAAAAALEEPAAAGQKEKEE), and 328 to 356 (SLKASNRKKKRTSFKRKASKRGTEQETKG). Residues 92–105 (AAAAAALEEPAAAG) are compositionally biased toward low complexity. Residues 332 to 347 (SNRKKKRTSFKRKASK) are compositionally biased toward basic residues. Residues 367–502 (PLMKPLLVFV…DRWNLHVERN (136 aa)) enclose the DAGKc domain. ANK repeat units follow at residues 943 to 972 (GHCSLLHYAAKTGNGDIVKYILDHGPAELL) and 979 to 1008 (TGETALHKAACQRNRAVCQLLVDAGASLRQ). The PDZ-binding motif lies at 1048–1050 (TAV).

Belongs to the eukaryotic diacylglycerol kinase family. Interacts (via PDZ-binding motif) with DLG4; controls the localization of DGKI to the synapse. Interacts (via PDZ-binding motif) with DLG1. Interacts (via PDZ-binding motif) with DLG2. Interacts (via PDZ-binding motif) with DLG3. May interact with RASGRP3; involved in the regulation of RASGRP3 activity. In brain, expressed in the hippocampus and cerebellum with stronger expression in the Purkinje cell layer (at protein level). Expressed in kidney.

Its subcellular location is the cell projection. It localises to the axon. The protein localises to the dendrite. The protein resides in the presynapse. It is found in the postsynapse. Its subcellular location is the postsynaptic density. It localises to the synaptic cell membrane. The protein localises to the cytoplasmic vesicle. The protein resides in the secretory vesicle. It is found in the synaptic vesicle membrane. Its subcellular location is the cytoplasm. It localises to the cytosol. The protein localises to the nucleus. It carries out the reaction a 1,2-diacyl-sn-glycerol + ATP = a 1,2-diacyl-sn-glycero-3-phosphate + ADP + H(+). The enzyme catalyses 1,2-di-(9Z-octadecenoyl)-sn-glycerol + ATP = 1,2-di-(9Z-octadecenoyl)-sn-glycero-3-phosphate + ADP + H(+). The catalysed reaction is 1-octadecanoyl-2-(5Z,8Z,11Z,14Z-eicosatetraenoyl)-sn-glycerol + ATP = 1-octadecanoyl-2-(5Z,8Z,11Z,14Z-eicosatetraenoyl)-sn-glycero-3-phosphate + ADP + H(+). It catalyses the reaction 1-octadecanoyl-2-(9Z,12Z)-octadecadienoyl-sn-glycerol + ATP = 1-octadecanoyl-2-(9Z,12Z-octadecadienoyl)-sn-glycero-3-phosphate + ADP + H(+). Its pathway is lipid metabolism; glycerolipid metabolism. Its function is as follows. Diacylglycerol kinase that converts diacylglycerol/DAG into phosphatidic acid/phosphatidate/PA and regulates the respective levels of these two bioactive lipids. Thereby, acts as a central switch between the signaling pathways activated by these second messengers with different cellular targets and opposite effects in numerous biological processes. Has probably no preference for any of the diacylglycerols in terms of the acyl chain composition, especially for the acyl chain at the sn-2 position. By controlling the diacylglycerol/DAG-mediated activation of RASGRP3, negatively regulates the Rap1 signaling pathway. May play a role in presynaptic diacylglycerol/DAG signaling and control neurotransmitter release during metabotropic glutamate receptor-dependent long-term depression. This is Diacylglycerol kinase iota from Mus musculus (Mouse).